The sequence spans 2710 residues: Serine/threonine-protein kinase ATR (2710 aa).

Residues 1647-2257 (TLAKASFRCQ…LWMMAAVSKS (611 aa)) enclose the FAT domain. The 313-residue stretch at 2368–2680 (IADDAEILNS…GVNAAPSLPL (313 aa)) folds into the PI3K/PI4K catalytic domain. The interval 2374–2380 (ILNSLQK) is G-loop. Residues 2545–2553 (GLGDRHGEN) are catalytic loop. Residues 2565 to 2589 (HVDFSCLFDKGLLLEKPEVVPFRFT) form an activation loop region. The FATC domain maps to 2678–2710 (LPLSVEGQARRLIAEAVSHSNLGKMYVWWMAWF).

This sequence belongs to the PI3/PI4-kinase family. ATM subfamily.

It is found in the nucleus. It catalyses the reaction L-seryl-[protein] + ATP = O-phospho-L-seryl-[protein] + ADP + H(+). The catalysed reaction is L-threonyl-[protein] + ATP = O-phospho-L-threonyl-[protein] + ADP + H(+). Its function is as follows. Probable serine/threonine kinase. Seems to play a central role in cell-cycle regulation by transmitting DNA damage signals to downstream effectors of cell-cycle progression. May recognize the substrate consensus sequence [ST]-Q and phosphorylate histone variant H2AX to form H2AXS139ph at sites of DNA damage, thereby regulating DNA damage response mechanism. The chain is Serine/threonine-protein kinase ATR from Oryza sativa subsp. indica (Rice).